The chain runs to 856 residues: DNA mismatch repair protein MutS (856 aa).

615–622 (GPNMGGKS) contributes to the ATP binding site. A compositionally biased stretch (polar residues) spans 798–807 (ETTGHQQAIK). Residues 798–817 (ETTGHQQAIKNPSKAPREEQ) form a disordered region.

It belongs to the DNA mismatch repair MutS family.

In terms of biological role, this protein is involved in the repair of mismatches in DNA. It is possible that it carries out the mismatch recognition step. This protein has a weak ATPase activity. The sequence is that of DNA mismatch repair protein MutS from Photobacterium profundum (strain SS9).